Here is a 392-residue protein sequence, read N- to C-terminus: MIDCRYYQQNECRSCQWLEIPYSQQLAEKQHHLKQQLISINCDKAQWLAPFQSNEQCFRNKAKMLVSGSVERPILGILKNPNDPQSAIDLCDCPLYPARFSIIFSILKDFIGRAGLVPYNIAKQKGELKYILLTESIATGKLMLRFVLRTENKLPLIRRELPKLLEKLPHLEVVSVNLQPLHAAILEGEQEIFLTEQQFLPENFNSIPLFIRPQGFFQTNPKVAEGLYATAQQWVSELPIYNLWDLFCGVGGFGLHCAKALQEKWGKPIKLTGIEISSSAILAASHSAKILGLEHVNFQSLDAASVIENKNENKPDLVIVNPPRRGIGKELSEFLNQIQPHFILYSSCNAMTMGKDLQHLTCYKPLKIQLFDMFPQTSHYEVLVLLERKKIN.

C4, C12, C15, and C93 together coordinate [4Fe-4S] cluster. S-adenosyl-L-methionine contacts are provided by Q218, F247, E275, and N321. C348 acts as the Nucleophile in catalysis.

Belongs to the class I-like SAM-binding methyltransferase superfamily. RNA M5U methyltransferase family. RlmC subfamily.

The catalysed reaction is uridine(747) in 23S rRNA + S-adenosyl-L-methionine = 5-methyluridine(747) in 23S rRNA + S-adenosyl-L-homocysteine + H(+). Its function is as follows. Catalyzes the formation of 5-methyl-uridine at position 747 (m5U747) in 23S rRNA. The chain is 23S rRNA (uracil(747)-C(5))-methyltransferase RlmC from Haemophilus influenzae (strain 86-028NP).